We begin with the raw amino-acid sequence, 334 residues long: PDZ domain-containing protein MAGIX (334 aa).

Composition is skewed to basic and acidic residues over residues 1-13 and 209-224; these read MEPR…DPRG and LETH…EPRK. Disordered stretches follow at residues 1 to 26 and 209 to 306; these read MEPR…LAGP and LETH…WLVP. The PDZ domain maps to 125-209; that stretch reads SVELVRGYAG…QLHLVIRRPL (85 aa). Residues 244–260 show a composition bias toward polar residues; the sequence is GSRSSSTSLVQHPPSRT. Serine 272 carries the post-translational modification Phosphoserine.

The polypeptide is PDZ domain-containing protein MAGIX (MAGIX) (Homo sapiens (Human)).